We begin with the raw amino-acid sequence, 609 residues long: Aspartate--tRNA(Asp/Asn) ligase (609 aa).

Glu175 lines the L-aspartate pocket. An aspartate region spans residues 199–202 (QQFK). Arg221 and His468 together coordinate L-aspartate. 221–223 (RDE) is a binding site for ATP. An ATP-binding site is contributed by Glu502. Arg509 is a binding site for L-aspartate. ATP is bound at residue 554 to 557 (GIDR).

It belongs to the class-II aminoacyl-tRNA synthetase family. Type 1 subfamily. Homodimer.

Its subcellular location is the cytoplasm. The enzyme catalyses tRNA(Asx) + L-aspartate + ATP = L-aspartyl-tRNA(Asx) + AMP + diphosphate. Functionally, aspartyl-tRNA synthetase with relaxed tRNA specificity since it is able to aspartylate not only its cognate tRNA(Asp) but also tRNA(Asn). Reaction proceeds in two steps: L-aspartate is first activated by ATP to form Asp-AMP and then transferred to the acceptor end of tRNA(Asp/Asn). The chain is Aspartate--tRNA(Asp/Asn) ligase from Caulobacter sp. (strain K31).